The following is a 130-amino-acid chain: Small ribosomal subunit protein uS11c (130 aa).

The protein belongs to the universal ribosomal protein uS11 family. In terms of assembly, part of the 30S ribosomal subunit.

Its subcellular location is the plastid. It is found in the chloroplast. The protein is Small ribosomal subunit protein uS11c of Chaetosphaeridium globosum (Charophycean green alga).